Here is a 316-residue protein sequence, read N- to C-terminus: Glutathione synthetase (316 aa).

The ATP-grasp domain maps to 124 to 310; sequence EKLFTAWFPE…ITGKLMDAIE (187 aa). 150–207 provides a ligand contact to ATP; it reads FREEHGDVILKPLDGMGGASIFRVKENDPNVSVIIETLTNHGQNYAMAQTFVPDISNG. 2 residues coordinate Mg(2+): glutamate 281 and asparagine 283.

The protein belongs to the prokaryotic GSH synthase family. Requires Mg(2+) as cofactor. The cofactor is Mn(2+).

The enzyme catalyses gamma-L-glutamyl-L-cysteine + glycine + ATP = glutathione + ADP + phosphate + H(+). The protein operates within sulfur metabolism; glutathione biosynthesis; glutathione from L-cysteine and L-glutamate: step 2/2. This chain is Glutathione synthetase, found in Vibrio parahaemolyticus serotype O3:K6 (strain RIMD 2210633).